The chain runs to 304 residues: Recombination-associated protein RdgC (304 aa).

It belongs to the RdgC family.

It localises to the cytoplasm. The protein localises to the nucleoid. May be involved in recombination. This Shewanella putrefaciens (strain CN-32 / ATCC BAA-453) protein is Recombination-associated protein RdgC.